A 737-amino-acid polypeptide reads, in one-letter code: Death domain-associated protein 6 (737 aa).

Positions 1–55 are disordered; it reads MATANSIIVLDDDDEDEAAAQPGPSHPPPNPASPQAEAPGSSQPHGAGGSSSSGG. The tract at residues 1-159 is necessary for interaction with USP7 and ATRX; the sequence is MATANSIIVL…TSSEPSGNNP (159 aa). Position 25 is a phosphoserine (serine 25). Residues 33–45 are compositionally biased toward low complexity; that stretch reads SPQAEAPGSSQPH. A Glycyl lysine isopeptide (Lys-Gly) (interchain with G-Cter in SUMO2) cross-link involves residue lysine 142. The tract at residues 145 to 184 is disordered; it reads LAPAATSSEPSGNNPPTDPSSDPTNAETTASEAPRTRGSR. Positions 149–175 are enriched in polar residues; sequence ATSSEPSGNNPPTDPSSDPTNAETTAS. The stretch at 179–216 forms a coiled coil; the sequence is RTRGSRRQIQRLEQLLALYVAEIRRLQEKELDLSELDD. Residues 182-417 form an interaction with histone H3.3 region; the sequence is GSRRQIQRLE…PLKASLDSGE (236 aa). Serine 212 is subject to Phosphoserine. Residues 346 to 567 are necessary for interaction with USP7; it reads GIDPALSDPA…SPISQLFELE (222 aa). Positions 382–556 are disordered; the sequence is QDKSEEGERQ…ENLEELLLEE (175 aa). The Nuclear localization signal motif lies at 390 to 394; sequence RQKRR. 2 positions are modified to phosphoserine: serine 412 and serine 424. The segment covering 422 to 432 has biased composition (polar residues); it reads MASQECPTTSK. Positions 432–474 form a coiled coil; the sequence is KPETDDEEDEESEEEEEEEEEEEEEEATDSEEEEDLEQMQEGQ. Positions 435–489 are enriched in acidic residues; that stretch reads TDDEEDEESEEEEEEEEEEEEEEATDSEEEEDLEQMQEGQGDDEEEEEEEEEAGQ. Threonine 459 carries the post-translational modification Phosphothreonine. Phosphoserine occurs at positions 494 and 497. The residue at position 511 (lysine 511) is an N6-acetyllysine. Residues 517 to 527 are compositionally biased toward polar residues; that stretch reads MGEQQNKEFTV. Low complexity predominate over residues 528–547; that stretch reads SPSSEEPLAPSSIDAESNGE. Serine 558 and serine 578 each carry phosphoserine. A disordered region spans residues 569-719; that stretch reads EALPLDTTPS…QPSRPGTYKM (151 aa). A compositionally biased stretch (basic and acidic residues) spans 579–592; it reads PEERDISSSRKQSE. The interaction with SPOP stretch occupies residues 624–737; the sequence is CPPCKKSRKE…EEIIVLSDSD (114 aa). Positions 626–632 match the Nuclear localization signal motif; that stretch reads PCKKSRK. Residues lysine 628 and lysine 629 each participate in a glycyl lysine isopeptide (Lys-Gly) (interchain with G-Cter in SUMO1) cross-link. Residues 647–657 are compositionally biased toward basic and acidic residues; that stretch reads ERQRSVHEKNG. Residues serine 665, serine 668, serine 685, serine 699, serine 734, and serine 736 each carry the phosphoserine modification. Residues 678 to 713 show a composition bias toward polar residues; it reads DSSTRVDSPSHGLVTSSLCSASQARLSQTPHSQPSR. The segment at 730–737 is sumo interaction motif (SIM); it reads IIVLSDSD.

Belongs to the DAXX family. As to quaternary structure, homomultimer. Interacts (via C-terminus) with TNFRSF6 (via death domain). Interacts with PAX5, SLC2A4/GLUT4, MAP3K5, TGFBR2, phosphorylated dimeric HSPB1/HSP27, CENPC, ETS1, sumoylated PML, UBE2I, MCRS1 and TP53. Interacts (via N-terminus) with HIPK2 and HIPK3. Interacts with HIPK1, which induces translocation from PML/POD/ND10 nuclear bodies to chromatin and enhances association with HDAC1. Interacts (non-phosphorylated) with PAX3, PAX7, DEK, HDAC1, HDAC2, HDAC3, acetylated histone H4 and histones H2A, H2B, H3, H3.3 and H4. Interacts with SPOP; mediating CUL3-dependent proteasomal degradation. Interacts with CBP; the interaction is dependent the sumoylation of CBP and suppresses CBP transcriptional activity via recruitment of HDAC2 directly in the complex with TP53 and HIPK2. Interacts with AXIN1; the interaction stimulates the interaction of DAXX with TP53, stimulates 'Ser-46' phosphorylation of TP53 on and induces cell death on UV irradiation. Interacts with MDM2; the interaction is direct. Interacts with USP7; the interaction is direct and independent of MDM2 and TP53. Part of a complex with DAXX, MDM2 and USP7 under non-stress conditions. Interacts (via N-terminus) with RASSF1 (via C-terminus); the interaction is independent of MDM2 and TP53; RASSF1 isoform A disrupts interactions among MDM2, DAXX and USP7, thus contributing to the efficient activation of TP53 by promoting MDM2 self-ubiquitination in cell-cycle checkpoint control in response to DNA damage. Interacts with ATRX to form the chromatin remodeling complex ATRX:DAXX. Interacts with HSF1 (via homotrimeric form preferentially); this interaction relieves homotrimeric HSF1 from repression of its transcriptional activity by HSP90-dependent multichaperone complex upon heat shock. In terms of processing, sumoylated with SUMO1 on multiple lysine residues. Polyubiquitinated; which is promoted by CUL3 and SPOP and results in proteasomal degradation. Ubiquitinated by MDM2; inducing its degradation. Deubiquitinated by USP7; leading to stabilize it.

Its subcellular location is the cytoplasm. The protein resides in the nucleus. The protein localises to the nucleoplasm. It is found in the PML body. It localises to the nucleolus. Its subcellular location is the chromosome. The protein resides in the centromere. In terms of biological role, transcription corepressor known to repress transcriptional potential of several sumoylated transcription factors. Down-regulates basal and activated transcription. Its transcription repressor activity is modulated by recruiting it to subnuclear compartments like the nucleolus or PML/POD/ND10 nuclear bodies through interactions with MCSR1 and PML, respectively. Seems to regulate transcription in PML/POD/ND10 nuclear bodies together with PML and may influence TNFRSF6-dependent apoptosis thereby. Inhibits transcriptional activation of PAX3 and ETS1 through direct protein-protein interactions. Modulates PAX5 activity; the function seems to involve CREBBP. Acts as an adapter protein in a MDM2-DAXX-USP7 complex by regulating the RING-finger E3 ligase MDM2 ubiquitination activity. Under non-stress condition, in association with the deubiquitinating USP7, prevents MDM2 self-ubiquitination and enhances the intrinsic E3 ligase activity of MDM2 towards TP53, thereby promoting TP53 ubiquitination and subsequent proteasomal degradation. Upon DNA damage, its association with MDM2 and USP7 is disrupted, resulting in increased MDM2 autoubiquitination and consequently, MDM2 degradation, which leads to TP53 stabilization. Acts as a histone chaperone that facilitates deposition of histone H3.3. Acts as a targeting component of the chromatin remodeling complex ATRX:DAXX which has ATP-dependent DNA translocase activity and catalyzes the replication-independent deposition of histone H3.3 in pericentric DNA repeats outside S-phase and telomeres, and the in vitro remodeling of H3.3-containing nucleosomes. Does not affect the ATPase activity of ATRX but alleviates its transcription repression activity. Upon neuronal activation associates with regulatory elements of selected immediate early genes where it promotes deposition of histone H3.3 which may be linked to transcriptional induction of these genes. Required for the recruitment of histone H3.3:H4 dimers to PML-nuclear bodies (PML-NBs); the process is independent of ATRX and facilitated by ASF1A; PML-NBs are suggested to function as regulatory sites for the incorporation of newly synthesized histone H3.3 into chromatin. Proposed to mediate activation of the JNK pathway and apoptosis via MAP3K5 in response to signaling from TNFRSF6 and TGFBR2. Interaction with HSPB1/HSP27 may prevent interaction with TNFRSF6 and MAP3K5 and block DAXX-mediated apoptosis. In contrast, in lymphoid cells JNC activation and TNFRSF6-mediated apoptosis may not involve DAXX. Plays a role as a positive regulator of the heat shock transcription factor HSF1 activity during the stress protein response. The polypeptide is Death domain-associated protein 6 (DAXX) (Canis lupus familiaris (Dog)).